Here is a 326-residue protein sequence, read N- to C-terminus: Probable cell division protein WhiA (326 aa).

Residues S275–S308 constitute a DNA-binding region (H-T-H motif).

This sequence belongs to the WhiA family.

Involved in cell division and chromosome segregation. In Renibacterium salmoninarum (strain ATCC 33209 / DSM 20767 / JCM 11484 / NBRC 15589 / NCIMB 2235), this protein is Probable cell division protein WhiA.